Consider the following 98-residue polypeptide: MAITLLEGALYGFFAVTGVLIASFIIGEIVHLYNEKQSNENFAKAIDQMSKSTVTAIESIKDTTVTGINALLNMDTLRDVNSLAREKAKDQNPSSQAK.

A helical transmembrane segment spans residues 10–30 (LYGFFAVTGVLIASFIIGEIV).

It is found in the host membrane. This is an uncharacterized protein from Saccharolobus islandicus (Sulfolobus islandicus).